Here is a 745-residue protein sequence, read N- to C-terminus: Mediator of RNA polymerase II transcription subunit 25 (745 aa).

The segment at 1-226 (MVPGSEGPAR…PRHMVLVRGL (226 aa)) is interaction with the Mediator complex. Residues 233-243 (SSTSGSLQTKQ) are compositionally biased toward polar residues. Disordered regions lie at residues 233–266 (SSTS…QALP) and 299–374 (LGPR…VTPG). Over residues 252–262 (ASAATLSAAPP) the composition is skewed to low complexity. Over residues 324–342 (PAPPLAPVPPGAPKPPPAS) the composition is skewed to pro residues. The interaction with VP16 stretch occupies residues 389-543 (LGGQQSVSNK…VNGIRQVITN (155 aa)). The tract at residues 395-545 (VSNKLLAWSG…GIRQVITNHK (151 aa)) is interaction with CREBBP. Interaction with RARA regions lie at residues 563–652 (APPV…LLNP) and 639–705 (PGAN…WPTQ). The disordered stretch occupies residues 584-738 (LRAPQPQPQG…PGLQPSVMED (155 aa)). Residues 596–617 (GASAATGQPQPQGATQAPTGAP) are compositionally biased toward low complexity. A compositionally biased stretch (pro residues) spans 618–631 (QGPPGAAPGPPPSG). The short motif at 645–649 (LRSLL) is the LXXLL motif element. The segment covering 652 to 663 (PAPPQTGVPPPQ) has biased composition (pro residues). Arg723 bears the Asymmetric dimethylarginine mark.

It belongs to the Mediator complex subunit 25 family. As to quaternary structure, component of the Mediator complex, which is composed of MED1, MED4, MED6, MED7, MED8, MED9, MED10, MED11, MED12, MED13, MED13L, MED14, MED15, MED16, MED17, MED18, MED19, MED20, MED21, MED22, MED23, MED24, MED25, MED26, MED27, MED29, MED30, MED31, CCNC, CDK8 and CDC2L6/CDK11. The MED12, MED13, CCNC and CDK8 subunits form a distinct module termed the CDK8 module. Mediator containing the CDK8 module is less active than Mediator lacking this module in supporting transcriptional activation. Individual preparations of the Mediator complex lacking one or more distinct subunits have been variously termed ARC, CRSP, DRIP, PC2, SMCC and TRAP. Interacts with CREBBP. Interacts with ESR1, GR and THRB in a ligand-dependent fashion. Binds the Herpes simplex virus activator VP16. Interacts with RARA and RXRA in a ligand-dependent fashion.

Its subcellular location is the nucleus. In terms of biological role, component of the Mediator complex, a coactivator involved in the regulated transcription of nearly all RNA polymerase II-dependent genes. Mediator functions as a bridge to convey information from gene-specific regulatory proteins to the basal RNA polymerase II transcription machinery. Mediator is recruited to promoters by direct interactions with regulatory proteins and serves as a scaffold for the assembly of a functional preinitiation complex with RNA polymerase II and the general transcription factors. Required for RARA/RXRA-mediated transcription. This chain is Mediator of RNA polymerase II transcription subunit 25 (Med25), found in Mus musculus (Mouse).